The sequence spans 703 residues: Polyribonucleotide nucleotidyltransferase (703 aa).

Residues Asp488 and Asp494 each coordinate Mg(2+). A KH domain is found at 555-614; the sequence is PRLYVMKINPEKIRDVIGKGGAVIRALTEETGTQINIEEDGTITIASNDSAKADEAKRRI. The region spanning 624–692 is the S1 motif domain; it reads GKVYEGAITK…EKGRVKLSMK (69 aa).

Belongs to the polyribonucleotide nucleotidyltransferase family. It depends on Mg(2+) as a cofactor.

Its subcellular location is the cytoplasm. The enzyme catalyses RNA(n+1) + phosphate = RNA(n) + a ribonucleoside 5'-diphosphate. Its function is as follows. Involved in mRNA degradation. Catalyzes the phosphorolysis of single-stranded polyribonucleotides processively in the 3'- to 5'-direction. The sequence is that of Polyribonucleotide nucleotidyltransferase from Polaromonas naphthalenivorans (strain CJ2).